A 465-amino-acid polypeptide reads, in one-letter code: Ribulose bisphosphate carboxylase large chain (465 aa).

Lys-4 bears the N6,N6,N6-trimethyllysine mark. Asn-113 and Thr-163 together coordinate substrate. Residue Lys-165 is the Proton acceptor of the active site. Lys-167 lines the substrate pocket. Mg(2+) contacts are provided by Lys-191, Asp-193, and Glu-194. Lys-191 is subject to N6-carboxylysine. His-284 functions as the Proton acceptor in the catalytic mechanism. Positions 285, 317, and 369 each coordinate substrate.

The protein belongs to the RuBisCO large chain family. Type I subfamily. As to quaternary structure, heterohexadecamer of 8 large chains and 8 small chains; disulfide-linked. The disulfide link is formed within the large subunit homodimers. Mg(2+) is required as a cofactor. The disulfide bond which can form in the large chain dimeric partners within the hexadecamer appears to be associated with oxidative stress and protein turnover.

Its subcellular location is the plastid. The protein localises to the chloroplast. It carries out the reaction 2 (2R)-3-phosphoglycerate + 2 H(+) = D-ribulose 1,5-bisphosphate + CO2 + H2O. It catalyses the reaction D-ribulose 1,5-bisphosphate + O2 = 2-phosphoglycolate + (2R)-3-phosphoglycerate + 2 H(+). Functionally, ruBisCO catalyzes two reactions: the carboxylation of D-ribulose 1,5-bisphosphate, the primary event in carbon dioxide fixation, as well as the oxidative fragmentation of the pentose substrate in the photorespiration process. Both reactions occur simultaneously and in competition at the same active site. The polypeptide is Ribulose bisphosphate carboxylase large chain (Morella cerifera (Wax myrtle)).